Consider the following 302-residue polypeptide: Cardiolipin synthase (CMP-forming) (302 aa).

The interval Pro65–Asp84 is disordered. Over residues Gly71–Asp84 the composition is skewed to low complexity. 5 helical membrane-spanning segments follow: residues Ile109–Leu129, Phe133–Ile153, Ile190–Val212, Leu250–Leu270, and Gln271–Tyr289.

The protein belongs to the CDP-alcohol phosphatidyltransferase class-I family. A divalent metal cation is required as a cofactor.

The protein resides in the mitochondrion inner membrane. It catalyses the reaction a CDP-1,2-diacyl-sn-glycerol + a 1,2-diacyl-sn-glycero-3-phospho-(1'-sn-glycerol) = a cardiolipin + CMP + H(+). Catalyzes the synthesis of cardiolipin (CL) (diphosphatidylglycerol) by specifically transferring a phosphatidyl group from CDP-diacylglycerol to phosphatidylglycerol (PG). CL is a key phospholipid in mitochondrial membranes and plays important roles in maintaining the functional integrity and dynamics of mitochondria under both optimal and stress conditions. This is Cardiolipin synthase (CMP-forming) (Crls1) from Rattus norvegicus (Rat).